The chain runs to 904 residues: Anoctamin-5 (904 aa).

The Cytoplasmic portion of the chain corresponds to 1-290 (MVEQEGLTAK…HLIRNYFGEK (290 aa)). The chain crosses the membrane as a helical span at residues 291-311 (IGIYFVFLGYYTEMLLFAALV). Topologically, residues 312 to 371 (GLACFIYGLLSMENNRTSTEICDPDIGGQMIMCPLCDEVCDYWRLNTTCLHSKFSHLFDN) are extracellular. 3 N-linked (GlcNAc...) asparagine glycosylation sites follow: Asn326, Asn357, and Asn371. Residues 372 to 392 (ESTVFFALFMGIWVTLFLEFW) form a helical membrane-spanning segment. The Cytoplasmic portion of the chain corresponds to 393 to 453 (KQRQARLEYE…CHRIPWYFVS (61 aa)). The chain crosses the membrane as a helical span at residues 454–474 (GTTVTFGMALLLSSMVSILIY). The Extracellular segment spans residues 475–502 (RLSVFATFASFMESEATLQSVKSFFTPQ). Residues 503-523 (LATALSGSCLNCIVILILNFF) form a helical membrane-spanning segment. At 524–548 (YEKISAWITKMEIPRTHQEYESSLT) the chain is on the cytoplasmic side. A helical transmembrane segment spans residues 549 to 569 (LKMFLFQFVNYYSSCFYVAFF). Residues 570–667 (KGKFVGYPGS…RGLFYEYLET (98 aa)) are Extracellular-facing. The helical transmembrane segment at 668-688 (VIQFGFATLFVASFPLAPLFA) threads the bilayer. The Cytoplasmic segment spans residues 689 to 723 (LMNNIMGIRVDAWKLTTQYRRPVAAKAHSIGVWQD). The helical transmembrane segment at 724–744 (ILFGMAIVSVATNAFIVSFTS) threads the bilayer. The Extracellular segment spans residues 745-825 (DIIPRLVYFY…FWHVLAAKMT (81 aa)). Residues Asn759, Asn769, and Asn782 are each glycosylated (N-linked (GlcNAc...) asparagine). The chain crosses the membrane as a helical span at residues 826–846 (FIIVMEHVVFLFKFLLAWLIP). The Cytoplasmic portion of the chain corresponds to 847–904 (DVPKDVVEKIKREKLMTIKIIHDFELNKLKENLDVEYGNIMKNVLVDEDNSLKAKTTV).

This sequence belongs to the anoctamin family. Highly expressed in skeletal muscle, bone tissues and thyroid gland.

The protein localises to the endoplasmic reticulum membrane. It is found in the cell membrane. Functionally, plays a role in plasma membrane repair in a process involving annexins. Does not exhibit calcium-activated chloride channel (CaCC) activity. This chain is Anoctamin-5 (Ano5), found in Mus musculus (Mouse).